We begin with the raw amino-acid sequence, 165 residues long: Chorismate pyruvate-lyase (165 aa).

Residues methionine 35, arginine 77, leucine 115, and glutamate 156 each coordinate substrate.

The protein belongs to the UbiC family. Monomer.

The protein resides in the cytoplasm. It catalyses the reaction chorismate = 4-hydroxybenzoate + pyruvate. Its pathway is cofactor biosynthesis; ubiquinone biosynthesis. Removes the pyruvyl group from chorismate, with concomitant aromatization of the ring, to provide 4-hydroxybenzoate (4HB) for the ubiquinone pathway. The polypeptide is Chorismate pyruvate-lyase (Shigella dysenteriae serotype 1 (strain Sd197)).